The chain runs to 54 residues: Pars intercerebralis major peptide D1 (54 aa).

It belongs to the granulin family. Six disulfide bonds are present. In terms of tissue distribution, brain.

The protein localises to the secreted. This chain is Pars intercerebralis major peptide D1, found in Locusta migratoria (Migratory locust).